The following is a 559-amino-acid chain: Vacuolar protein 8 (559 aa).

G2 carries the N-myristoyl glycine lipid modification. C4 carries the S-palmitoyl cysteine lipid modification. 8 ARM repeats span residues T77 to V116, T118 to T157, E159 to H198, D200 to V239, N243 to S282, E284 to I323, P325 to A365, and D409 to S448.

This sequence belongs to the beta-catenin family.

The protein localises to the vacuole membrane. In terms of biological role, functions in both vacuole inheritance and protein targeting from the cytoplasm to vacuole. In Gibberella zeae (strain ATCC MYA-4620 / CBS 123657 / FGSC 9075 / NRRL 31084 / PH-1) (Wheat head blight fungus), this protein is Vacuolar protein 8 (VAC8).